The following is a 138-amino-acid chain: ATP synthase epsilon chain (138 aa).

It belongs to the ATPase epsilon chain family. As to quaternary structure, F-type ATPases have 2 components, CF(1) - the catalytic core - and CF(0) - the membrane proton channel. CF(1) has five subunits: alpha(3), beta(3), gamma(1), delta(1), epsilon(1). CF(0) has three main subunits: a, b and c.

Its subcellular location is the cell inner membrane. Its function is as follows. Produces ATP from ADP in the presence of a proton gradient across the membrane. This Polaromonas sp. (strain JS666 / ATCC BAA-500) protein is ATP synthase epsilon chain.